We begin with the raw amino-acid sequence, 850 residues long: Mitogen-activated protein kinase kinase kinase 11 (850 aa).

At serine 11 the chain carries Phosphoserine. Residues 18–31 (GSGSGGGGGSGGVR) show a composition bias toward gly residues. The segment at 18 to 37 (GSGSGGGGGSGGVRPEGSPK) is disordered. At serine 35 the chain carries Phosphoserine. Residues 42–106 (YANPVWTALF…PSNYVSRGGG (65 aa)) form the SH3 domain. Residues 118-380 (LRLEEVIGIG…ASILQQLEAL (263 aa)) enclose the Protein kinase domain. ATP-binding positions include 124–132 (IGIGGFGKV) and lysine 145. Catalysis depends on aspartate 242, which acts as the Proton acceptor. Threonine 278 bears the Phosphothreonine; by autocatalysis mark. Serine 282 is modified (phosphoserine; by autocatalysis and MAP4K1). Serine 395 carries the post-translational modification Phosphoserine. Leucine-zipper regions lie at residues 404-425 (IQGL…EEEL) and 439-460 (LRRR…ELTL). Phosphoserine occurs at positions 508, 525, 549, 556, and 557. Residues 536–850 (LEPAESGQTW…QAPWAPEAGP (315 aa)) form a disordered region. A compositionally biased stretch (basic and acidic residues) spans 551–563 (RRLDDSSNGERRA). Positions 598–610 (SSPLGSPSTPPAL) are enriched in low complexity. Residue serine 655 is modified to Phosphoserine. Residues 677-693 (TAPPPAQMASPCPPDLP) show a composition bias toward pro residues. The residue at position 712 (threonine 712) is a Phosphothreonine. Phosphoserine occurs at positions 728, 731, 743, 751, 761, 773, 792, 796, and 818. Pro residues predominate over residues 790-802 (RPSPLPSPQPAPR). Residues 803–819 (RAPWTLFPDSDPFWDSP) are compositionally biased toward low complexity.

The protein belongs to the protein kinase superfamily. STE Ser/Thr protein kinase family. MAP kinase kinase kinase subfamily. As to quaternary structure, homodimer; undergoes dimerization during activation. Interacts with MAP2K4/MKK4. Interacts with MAP2K7/MKK7. Found in a complex with SH3RF1, RAC1, MAP2K7/MKK7, MAPK8IP1/JIP1 and MAPK8/JNK1. Mg(2+) is required as a cofactor. Autophosphorylation on serine and threonine residues within the activation loop plays a role in enzyme activation. Thr-278 is likely to be the main autophosphorylation site. Phosphorylation of Ser-556 and Ser-557 is induced by CDC42.

Its subcellular location is the cytoplasm. The protein resides in the cytoskeleton. It is found in the microtubule organizing center. The protein localises to the centrosome. It catalyses the reaction L-seryl-[protein] + ATP = O-phospho-L-seryl-[protein] + ADP + H(+). It carries out the reaction L-threonyl-[protein] + ATP = O-phospho-L-threonyl-[protein] + ADP + H(+). With respect to regulation, homodimerization via the leucine zipper domains is required for autophosphorylation and subsequent activation. Activates the JUN N-terminal pathway. Required for serum-stimulated cell proliferation and for mitogen and cytokine activation of MAPK14 (p38), MAPK3 (ERK) and MAPK8 (JNK1) through phosphorylation and activation of MAP2K4/MKK4 and MAP2K7/MKK7. Plays a role in mitogen-stimulated phosphorylation and activation of BRAF, but does not phosphorylate BRAF directly. Influences microtubule organization during the cell cycle. The chain is Mitogen-activated protein kinase kinase kinase 11 (Map3k11) from Rattus norvegicus (Rat).